We begin with the raw amino-acid sequence, 355 residues long: Beta-ketoacyl-[acyl-carrier-protein] synthase III 1 (355 aa).

Catalysis depends on residues cysteine 122 and histidine 280. The interval 281–285 (QANER) is ACP-binding. Asparagine 311 is an active-site residue.

This sequence belongs to the thiolase-like superfamily. FabH family. As to quaternary structure, homodimer.

The protein resides in the cytoplasm. It catalyses the reaction malonyl-[ACP] + acetyl-CoA + H(+) = 3-oxobutanoyl-[ACP] + CO2 + CoA. The protein operates within lipid metabolism; fatty acid biosynthesis. Catalyzes the condensation reaction of fatty acid synthesis by the addition to an acyl acceptor of two carbons from malonyl-ACP. Catalyzes the first condensation reaction which initiates fatty acid synthesis and may therefore play a role in governing the total rate of fatty acid production. Possesses both acetoacetyl-ACP synthase and acetyl transacylase activities. Its substrate specificity determines the biosynthesis of branched-chain and/or straight-chain of fatty acids. In Streptomyces avermitilis (strain ATCC 31267 / DSM 46492 / JCM 5070 / NBRC 14893 / NCIMB 12804 / NRRL 8165 / MA-4680), this protein is Beta-ketoacyl-[acyl-carrier-protein] synthase III 1.